The sequence spans 208 residues: Small ribosomal subunit protein uS2 (208 aa).

A disordered region spans residues 189–208 (KPDQDLPVPPEEFETRLVQT).

The protein belongs to the universal ribosomal protein uS2 family.

The chain is Small ribosomal subunit protein uS2 from Pyrobaculum arsenaticum (strain DSM 13514 / JCM 11321 / PZ6).